A 177-amino-acid chain; its full sequence is MKRIVLLRLGHRPERDKRITTHVGLTARMLGAEGMLLASDDQGIVHSLEDVVRRWGGDFYIKNNVNFKQEIRAWKEEGGKVCHLSMYGVNLPDVTGELKKCKKLMIVVGAEKVPPEIYQLANWNVAVGSQPHSEVAAVAITMDRIAEGEPLEKEFPGAELTIVPAERGKHVIENIRE.

Residues Leu-84 and 109–113 (GAEKV) each bind S-adenosyl-L-methionine.

The protein belongs to the aTrm56 family. In terms of assembly, homodimer.

The protein resides in the cytoplasm. It catalyses the reaction cytidine(56) in tRNA + S-adenosyl-L-methionine = 2'-O-methylcytidine(56) in tRNA + S-adenosyl-L-homocysteine + H(+). Specifically catalyzes the AdoMet-dependent 2'-O-ribose methylation of cytidine at position 56 in tRNAs. The sequence is that of tRNA (cytidine(56)-2'-O)-methyltransferase from Methanosarcina acetivorans (strain ATCC 35395 / DSM 2834 / JCM 12185 / C2A).